A 468-amino-acid polypeptide reads, in one-letter code: Trehalose-2-sulfate acyltransferase PapA2 (468 aa).

The protein belongs to the PapA acyltransferase family.

The enzyme catalyses 2-O-sulfo-alpha,alpha-trehalose + hexadecanoyl-CoA = 2-O-sulfo-2'-O-hexadecanoyl-alpha,alpha-trehalose + CoA. In terms of biological role, catalyzes the acylation of trehalose-2-sulfate by adding the palmitoyl group at the 2'-position to yield the intermediate trehalose-2-sulfate-2'-palmitate (SL659). This is Trehalose-2-sulfate acyltransferase PapA2 (papA2) from Mycobacterium tuberculosis (strain ATCC 25177 / H37Ra).